The primary structure comprises 794 residues: Ent-kaurene synthase 1, chloroplastic (794 aa).

The N-terminal 28 residues, 1 to 28 (MSLLLSNSVLVGPKFRSSRISHASASLD), are a transit peptide targeting the chloroplast. Residues Asp543, Asp547, Asn687, and Glu695 each coordinate Mg(2+). The DDXXD motif motif lies at 543-547 (DDFFD).

This sequence belongs to the terpene synthase family. Mg(2+) serves as cofactor. As to expression, accumulates in leaves, and, at low levels, in germinating seeds.

The protein localises to the plastid. Its subcellular location is the chloroplast. The catalysed reaction is ent-copalyl diphosphate = ent-kaur-16-ene + diphosphate. It participates in secondary metabolite biosynthesis; terpenoid biosynthesis. It functions in the pathway plant hormone biosynthesis; gibberellin biosynthesis. Involved in the biosynthesis of ent-kaurene diterpenoids natural products such as oridonin, miltiradiene, eriocalyxin B and nezukol, known to exhibit antitumor, anti-inflammatory and antibacterial activities, and in the production of gibberellins phytohormones. Catalyzes the conversion of ent-copalyl diphosphate (ent-CPP) to ent-kaurene. This Isodon eriocalyx (Plectranthus eriocalyx) protein is Ent-kaurene synthase 1, chloroplastic.